The primary structure comprises 224 residues: Uracil-DNA glycosylase (224 aa).

The active-site Proton acceptor is D62.

Belongs to the uracil-DNA glycosylase (UDG) superfamily. UNG family.

It is found in the cytoplasm. It carries out the reaction Hydrolyzes single-stranded DNA or mismatched double-stranded DNA and polynucleotides, releasing free uracil.. In terms of biological role, excises uracil residues from the DNA which can arise as a result of misincorporation of dUMP residues by DNA polymerase or due to deamination of cytosine. This is Uracil-DNA glycosylase from Aliivibrio salmonicida (strain LFI1238) (Vibrio salmonicida (strain LFI1238)).